A 185-amino-acid chain; its full sequence is Ribosome-recycling factor (185 aa).

It belongs to the RRF family.

It localises to the cytoplasm. Its function is as follows. Responsible for the release of ribosomes from messenger RNA at the termination of protein biosynthesis. May increase the efficiency of translation by recycling ribosomes from one round of translation to another. In Dehalococcoides mccartyi (strain ATCC BAA-2266 / KCTC 15142 / 195) (Dehalococcoides ethenogenes (strain 195)), this protein is Ribosome-recycling factor.